Consider the following 387-residue polypeptide: Succinate--CoA ligase [ADP-forming] subunit beta (387 aa).

The region spanning 9-244 (KALLQRYGVN…WSQDDAKEAE (236 aa)) is the ATP-grasp domain. ATP is bound by residues Lys46, 53-55 (GRG), Glu99, Leu102, and Glu107. 2 residues coordinate Mg(2+): Asn199 and Asp213. Residues Asn264 and 321–323 (GIM) each bind substrate.

The protein belongs to the succinate/malate CoA ligase beta subunit family. As to quaternary structure, heterotetramer of two alpha and two beta subunits. Mg(2+) serves as cofactor.

The enzyme catalyses succinate + ATP + CoA = succinyl-CoA + ADP + phosphate. It carries out the reaction GTP + succinate + CoA = succinyl-CoA + GDP + phosphate. It participates in carbohydrate metabolism; tricarboxylic acid cycle; succinate from succinyl-CoA (ligase route): step 1/1. Succinyl-CoA synthetase functions in the citric acid cycle (TCA), coupling the hydrolysis of succinyl-CoA to the synthesis of either ATP or GTP and thus represents the only step of substrate-level phosphorylation in the TCA. The beta subunit provides nucleotide specificity of the enzyme and binds the substrate succinate, while the binding sites for coenzyme A and phosphate are found in the alpha subunit. The protein is Succinate--CoA ligase [ADP-forming] subunit beta of Methylobacillus flagellatus (strain ATCC 51484 / DSM 6875 / VKM B-1610 / KT).